Consider the following 297-residue polypeptide: MKDSALIELFLNEIWIEKQLSQNTIASYRLDLTALIQWLEKQQLTLINLDAIDLQTFLGERLNQGYKATSTARLLSAMRKLFQYLYREKYRTDDPSAVLSSPKLPSRLPKYLTEQQVTDLLNSPDVDIPLELRDKAMMELLYATGLRVTELVSLTIENININQGIVRVVGKGNKERIVPIGEEATYWIRQFMLYGRPFLLHGQSSDVVFPSKRALQMTRQTFWHRIKHYALLSDIDINSLSPHVLRHAFATHLVNHGADLRVVQMLLGHSDLSTTQIYTHVAKERLKHLHERYHPRG.

Residues 1–86 form the Core-binding (CB) domain; that stretch reads MKDSALIELF…AMRKLFQYLY (86 aa). In terms of domain architecture, Tyr recombinase spans 107-291; the sequence is RLPKYLTEQQ…AKERLKHLHE (185 aa). Active-site residues include arginine 147, lysine 171, histidine 243, arginine 246, and histidine 269. Tyrosine 278 (O-(3'-phospho-DNA)-tyrosine intermediate) is an active-site residue.

It belongs to the 'phage' integrase family. XerD subfamily. As to quaternary structure, forms a cyclic heterotetrameric complex composed of two molecules of XerC and two molecules of XerD.

The protein localises to the cytoplasm. Site-specific tyrosine recombinase, which acts by catalyzing the cutting and rejoining of the recombining DNA molecules. The XerC-XerD complex is essential to convert dimers of the bacterial chromosome into monomers to permit their segregation at cell division. It also contributes to the segregational stability of plasmids. The protein is Tyrosine recombinase XerD of Pasteurella multocida (strain Pm70).